Reading from the N-terminus, the 328-residue chain is Endo-beta-1,4-glucanase B (328 aa).

The first 17 residues, Met-1–Ala-17, serve as a signal peptide directing secretion. N-linked (GlcNAc...) asparagine glycosylation occurs at Asn-95. The Proton donor role is filled by Glu-155. Catalysis depends on Glu-262, which acts as the Nucleophile.

Belongs to the glycosyl hydrolase 5 (cellulase A) family.

The protein resides in the secreted. It catalyses the reaction Endohydrolysis of (1-&gt;4)-beta-D-glucosidic linkages in cellulose, lichenin and cereal beta-D-glucans.. Its function is as follows. Has endoglucanase activity on substrates containing beta-1,4 glycosidic bonds, like in carboxymethylcellulose (CMC), hydroxyethylcellulose (HEC) and beta-glucan. Involved in the degradation of complex natural cellulosic substrates. This chain is Endo-beta-1,4-glucanase B (eglB), found in Emericella nidulans (strain FGSC A4 / ATCC 38163 / CBS 112.46 / NRRL 194 / M139) (Aspergillus nidulans).